We begin with the raw amino-acid sequence, 596 residues long: Adenine deaminase (596 aa).

The protein belongs to the metallo-dependent hydrolases superfamily. Adenine deaminase family. It depends on Mn(2+) as a cofactor.

The catalysed reaction is adenine + H2O + H(+) = hypoxanthine + NH4(+). This chain is Adenine deaminase, found in Moorella thermoacetica (strain ATCC 39073 / JCM 9320).